A 167-amino-acid polypeptide reads, in one-letter code: Small ribosomal subunit protein uS5 (167 aa).

Residues 12 to 75 (LQEKLIAVNR…EKARRNMVTV (64 aa)) form the S5 DRBM domain.

The protein belongs to the universal ribosomal protein uS5 family. Part of the 30S ribosomal subunit. Contacts proteins S4 and S8.

In terms of biological role, with S4 and S12 plays an important role in translational accuracy. Located at the back of the 30S subunit body where it stabilizes the conformation of the head with respect to the body. The polypeptide is Small ribosomal subunit protein uS5 (Shewanella sp. (strain W3-18-1)).